A 298-amino-acid polypeptide reads, in one-letter code: Protein BZR1 homolog 1 (298 aa).

Disordered stretches follow at residues 1-25 (MTSG…RRER), 71-129 (GTTY…SPSR), 153-175 (VSSS…PKIR), and 190-217 (AVSA…ESDV). The required for DNA-binding stretch occupies residues 10–91 (RTPTWKEREN…PSSAGGASVG (82 aa)). The span at 96-128 (SSTQLLSAPSSSFPSPVPSYHASPASSSFPSPS) shows a compositional bias: low complexity. At Ser156 the chain carries Phosphoserine. A PEST-like region spans residues 204-224 (EHPDTIPECDESDVSTVDSGR).

This sequence belongs to the BZR/LAT61 family. Interacts with GF14C. Interacts with PUB24. Interacts with SMOS1. In terms of processing, phosphorylated on serine and threonine residues by GSK2. Dephosphorylated during response to brassinosteroid. Post-translationally, ubiquitinated by PUB24. Ubiquitination leads to its subsequent degradation by the 26S proteasome, thus reducing sensitivity to brassinosteroid signaling.

Its subcellular location is the nucleus. The protein localises to the cytoplasm. Its function is as follows. Positive brassinosteroid-signaling protein. Mediates downstream brassinosteroid-regulated growth response and feedback inhibition of brassinosteroid (BR) biosynthetic genes. May act as transcriptional repressor by binding the brassinosteroid-response element (BREE) (5'-CGTG(T/C)G-3') in the promoter of DLT (AC Q9LWU9), another positive regulator of BR signaling. Acts as a transcriptional repressor of LIC, a negative regulator of BR signaling, by binding to the BRRE element of its promoter. BZR1 and LIC play opposite roles in BR signaling and regulation of leaf bending. In Oryza sativa subsp. japonica (Rice), this protein is Protein BZR1 homolog 1.